Consider the following 867-residue polypeptide: Pentatricopeptide repeat-containing protein At2g39230, mitochondrial (867 aa).

The N-terminal 49 residues, 1-49 (MTTFMVSKRFRPPIFLHRFINPKPISSQTRFLHPPDNQSRDISDSTTET), are a transit peptide targeting the mitochondrion. Positions 27–74 (SQTRFLHPPDNQSRDISDSTTETISTLEFPHKTSVPNHSPLTSTSETE) are disordered. The segment covering 60–72 (SVPNHSPLTSTSE) has biased composition (polar residues). PPR repeat units lie at residues 168–202 (TPRAFNYLLNAYIRNKRMDYAVDCFGLMVDRKVVP), 203–237 (FVPYVNNVLSSLVRSNLIDEAKEIYNKMVLIGVAG), 238–272 (DNVTTQLLMRASLRERKPEEAVKIFRRVMSRGAEP), 273–307 (DGLLFSLAVQAACKTPDLVMALDLLREMRGKLGVP), 309–343 (SQETYTSVIVAFVKEGNMEEAVRVMDEMVGFGIPM), 344–378 (SVIAATSLVNGYCKGNELGKALDLFNRMEEEGLAP), 379–413 (DKVMFSVMVEWFCKNMEMEKAIEFYMRMKSVRIAP), 414–444 (SSVLVHTMIQGCLKAESPEAALEIFNDSFES), 448–482 (HGFMCNKIFLLFCKQGKVDAATSFLKMMEQKGIEP), 483–517 (NVVFYNNMMLAHCRMKNMDLARSIFSEMLEKGLEP), 518–552 (NNFTYSILIDGFFKNKDEQNAWDVINQMNASNFEA), 553–588 (NEVIYNTIINGLCKVGQTSKAKEMLQNLIKEKRYSM), 589–623 (SCTSYNSIIDGFVKVGDTDSAVETYREMSENGKSP), 624–658 (NVVTFTSLINGFCKSNRMDLALEMTHEMKSMELKL), 659–693 (DLPAYGALIDGFCKKNDMKTAYTLFSELPELGLMP), 694–728 (NVSVYNSLISGFRNLGKMDAAIDLYKKMVNDGISC), 729–763 (DLFTYTTMIDGLLKDGNINLASDLYSELLDLGIVP), 764–798 (DEILHMVLVNGLSKKGQFLKASKMLEEMKKKDVTP), and 799–833 (NVLLYSTVIAGHHREGNLNEAFRLHDEMLEKGIVH).

The protein belongs to the PPR family. P subfamily. Expressed in lateral organ junctions and shoot apical meristem (SAM).

The protein resides in the mitochondrion. Involved in lateral organ development and boundary demarcation. The protein is Pentatricopeptide repeat-containing protein At2g39230, mitochondrial (LOJ) of Arabidopsis thaliana (Mouse-ear cress).